The chain runs to 401 residues: Probable 2,3-bisphosphoglycerate-independent phosphoglycerate mutase (401 aa).

Belongs to the BPG-independent phosphoglycerate mutase family. A-PGAM subfamily.

It carries out the reaction (2R)-2-phosphoglycerate = (2R)-3-phosphoglycerate. Its pathway is carbohydrate degradation; glycolysis; pyruvate from D-glyceraldehyde 3-phosphate: step 3/5. Its function is as follows. Catalyzes the interconversion of 2-phosphoglycerate and 3-phosphoglycerate. This is Probable 2,3-bisphosphoglycerate-independent phosphoglycerate mutase from Thermotoga maritima (strain ATCC 43589 / DSM 3109 / JCM 10099 / NBRC 100826 / MSB8).